A 577-amino-acid polypeptide reads, in one-letter code: Proline--tRNA ligase (577 aa).

The protein belongs to the class-II aminoacyl-tRNA synthetase family. ProS type 1 subfamily. Homodimer.

The protein localises to the cytoplasm. The catalysed reaction is tRNA(Pro) + L-proline + ATP = L-prolyl-tRNA(Pro) + AMP + diphosphate. In terms of biological role, catalyzes the attachment of proline to tRNA(Pro) in a two-step reaction: proline is first activated by ATP to form Pro-AMP and then transferred to the acceptor end of tRNA(Pro). As ProRS can inadvertently accommodate and process non-cognate amino acids such as alanine and cysteine, to avoid such errors it has two additional distinct editing activities against alanine. One activity is designated as 'pretransfer' editing and involves the tRNA(Pro)-independent hydrolysis of activated Ala-AMP. The other activity is designated 'posttransfer' editing and involves deacylation of mischarged Ala-tRNA(Pro). The misacylated Cys-tRNA(Pro) is not edited by ProRS. This chain is Proline--tRNA ligase, found in Helicobacter pylori (strain ATCC 700392 / 26695) (Campylobacter pylori).